A 227-amino-acid chain; its full sequence is Endonuclease V (227 aa).

Mg(2+) contacts are provided by D46 and D114.

The protein belongs to the endonuclease V family. The cofactor is Mg(2+).

It localises to the cytoplasm. It catalyses the reaction Endonucleolytic cleavage at apurinic or apyrimidinic sites to products with a 5'-phosphate.. In terms of biological role, DNA repair enzyme involved in the repair of deaminated bases. Selectively cleaves double-stranded DNA at the second phosphodiester bond 3' to a deoxyinosine leaving behind the intact lesion on the nicked DNA. The protein is Endonuclease V of Alkalilimnicola ehrlichii (strain ATCC BAA-1101 / DSM 17681 / MLHE-1).